A 430-amino-acid polypeptide reads, in one-letter code: Probable aspartic-type endopeptidase TRV_06366 (430 aa).

The signal sequence occupies residues 1-17 (MHVSTLLVAVLLPLALS). The propeptide at 18 to 87 (KPTPRKKTSS…SKATAGSGKE (70 aa)) is activation peptide. Positions 61–104 (HEMEGYHPQPISKLPGNSKATAGSGKEGVESQDEKGEVVNNPTD) are disordered. Residues 87–104 (EGVESQDEKGEVVNNPTD) show a composition bias toward basic and acidic residues. One can recognise a Peptidase A1 domain in the interval 109-427 (FLSPVTIGGQ…DQRGPSISLA (319 aa)). Asp-125 is an active-site residue. Residue Asn-306 is glycosylated (N-linked (GlcNAc...) asparagine). Asp-314 is a catalytic residue.

It belongs to the peptidase A1 family.

The protein localises to the secreted. Functionally, probable secreted aspartic-type endopeptidase which contributes to virulence. This chain is Probable aspartic-type endopeptidase TRV_06366, found in Trichophyton verrucosum (strain HKI 0517).